The primary structure comprises 302 residues: Sulfate adenylyltransferase subunit 2 (302 aa).

The protein belongs to the PAPS reductase family. CysD subfamily. In terms of assembly, heterodimer composed of CysD, the smaller subunit, and CysN.

It catalyses the reaction sulfate + ATP + H(+) = adenosine 5'-phosphosulfate + diphosphate. The protein operates within sulfur metabolism; hydrogen sulfide biosynthesis; sulfite from sulfate: step 1/3. Functionally, with CysN forms the ATP sulfurylase (ATPS) that catalyzes the adenylation of sulfate producing adenosine 5'-phosphosulfate (APS) and diphosphate, the first enzymatic step in sulfur assimilation pathway. APS synthesis involves the formation of a high-energy phosphoric-sulfuric acid anhydride bond driven by GTP hydrolysis by CysN coupled to ATP hydrolysis by CysD. This chain is Sulfate adenylyltransferase subunit 2, found in Xanthomonas euvesicatoria pv. vesicatoria (strain 85-10) (Xanthomonas campestris pv. vesicatoria).